A 745-amino-acid chain; its full sequence is 5-methyltetrahydropteroyltriglutamate--homocysteine methyltransferase (745 aa).

5-methyltetrahydropteroyltri-L-glutamate contacts are provided by residues 19–22 and Lys119; that span reads RELK. L-homocysteine-binding positions include 418–420 and Glu471; that span reads IGS. L-methionine is bound by residues 418–420 and Glu471; that span reads IGS. Residues 502 to 503 and Trp548 contribute to the 5-methyltetrahydropteroyltri-L-glutamate site; that span reads RC. Asp586 contacts L-homocysteine. An L-methionine-binding site is contributed by Asp586. Glu592 contacts 5-methyltetrahydropteroyltri-L-glutamate. Zn(2+) contacts are provided by His628, Cys630, and Glu652. The Proton donor role is filled by His681. Cys713 is a binding site for Zn(2+).

Belongs to the vitamin-B12 independent methionine synthase family. Zn(2+) serves as cofactor.

The enzyme catalyses 5-methyltetrahydropteroyltri-L-glutamate + L-homocysteine = tetrahydropteroyltri-L-glutamate + L-methionine. The protein operates within amino-acid biosynthesis; L-methionine biosynthesis via de novo pathway; L-methionine from L-homocysteine (MetE route): step 1/1. Its function is as follows. Catalyzes the transfer of a methyl group from 5-methyltetrahydrofolate to homocysteine resulting in methionine formation. The chain is 5-methyltetrahydropteroyltriglutamate--homocysteine methyltransferase from Corynebacterium glutamicum (strain R).